The chain runs to 393 residues: NAD(P)H-quinone oxidoreductase subunit H, chloroplastic (393 aa).

Belongs to the complex I 49 kDa subunit family. In terms of assembly, NDH is composed of at least 16 different subunits, 5 of which are encoded in the nucleus.

The protein resides in the plastid. It localises to the chloroplast thylakoid membrane. It carries out the reaction a plastoquinone + NADH + (n+1) H(+)(in) = a plastoquinol + NAD(+) + n H(+)(out). It catalyses the reaction a plastoquinone + NADPH + (n+1) H(+)(in) = a plastoquinol + NADP(+) + n H(+)(out). Its function is as follows. NDH shuttles electrons from NAD(P)H:plastoquinone, via FMN and iron-sulfur (Fe-S) centers, to quinones in the photosynthetic chain and possibly in a chloroplast respiratory chain. The immediate electron acceptor for the enzyme in this species is believed to be plastoquinone. Couples the redox reaction to proton translocation, and thus conserves the redox energy in a proton gradient. This is NAD(P)H-quinone oxidoreductase subunit H, chloroplastic from Spinacia oleracea (Spinach).